The sequence spans 303 residues: NAD kinase (303 aa).

The Proton acceptor role is filled by D85. Residues 85-86 (DG), R90, 159-160 (ND), K187, D189, A224, and Q259 each bind NAD(+).

Belongs to the NAD kinase family. It depends on a divalent metal cation as a cofactor.

Its subcellular location is the cytoplasm. It catalyses the reaction NAD(+) + ATP = ADP + NADP(+) + H(+). In terms of biological role, involved in the regulation of the intracellular balance of NAD and NADP, and is a key enzyme in the biosynthesis of NADP. Catalyzes specifically the phosphorylation on 2'-hydroxyl of the adenosine moiety of NAD to yield NADP. The polypeptide is NAD kinase (Bdellovibrio bacteriovorus (strain ATCC 15356 / DSM 50701 / NCIMB 9529 / HD100)).